Consider the following 803-residue polypeptide: Lon protease (803 aa).

A Lon N-terminal domain is found at 9–202; the sequence is MPVLPLRDVV…YLLGMMESEA (194 aa). 356–363 contributes to the ATP binding site; that stretch reads GPPGVGKT. The Lon proteolytic domain maps to 592 to 773; the sequence is QNRIGEVTGL…DEVLGFALEN (182 aa). Catalysis depends on residues Ser-679 and Lys-722.

Belongs to the peptidase S16 family. Homohexamer. Organized in a ring with a central cavity.

It is found in the cytoplasm. The enzyme catalyses Hydrolysis of proteins in presence of ATP.. ATP-dependent serine protease that mediates the selective degradation of mutant and abnormal proteins as well as certain short-lived regulatory proteins. Required for cellular homeostasis and for survival from DNA damage and developmental changes induced by stress. Degrades polypeptides processively to yield small peptide fragments that are 5 to 10 amino acids long. Binds to DNA in a double-stranded, site-specific manner. The protein is Lon protease of Haemophilus influenzae (strain ATCC 51907 / DSM 11121 / KW20 / Rd).